Reading from the N-terminus, the 242-residue chain is 3-deoxy-manno-octulosonate cytidylyltransferase (242 aa).

This sequence belongs to the KdsB family.

The protein localises to the cytoplasm. The enzyme catalyses 3-deoxy-alpha-D-manno-oct-2-ulosonate + CTP = CMP-3-deoxy-beta-D-manno-octulosonate + diphosphate. Its pathway is nucleotide-sugar biosynthesis; CMP-3-deoxy-D-manno-octulosonate biosynthesis; CMP-3-deoxy-D-manno-octulosonate from 3-deoxy-D-manno-octulosonate and CTP: step 1/1. It functions in the pathway bacterial outer membrane biogenesis; lipopolysaccharide biosynthesis. Its function is as follows. Activates KDO (a required 8-carbon sugar) for incorporation into bacterial lipopolysaccharide in Gram-negative bacteria. The sequence is that of 3-deoxy-manno-octulosonate cytidylyltransferase from Anaeromyxobacter dehalogenans (strain 2CP-C).